We begin with the raw amino-acid sequence, 293 residues long: Transcription elongation factor S-II (293 aa).

The TFIIS N-terminal domain occupies alanine 4 to glycine 81. The segment at glycine 81–asparagine 123 is disordered. Low complexity predominate over residues valine 100–glutamine 116. A TFIIS central domain is found at isoleucine 133–alanine 248. The TFIIS-type zinc finger occupies aspartate 251 to lysine 291. Zn(2+)-binding residues include cysteine 255, cysteine 258, cysteine 283, and cysteine 286.

It belongs to the TFS-II family.

The protein localises to the nucleus. Necessary for efficient RNA polymerase II transcription elongation past template-encoded arresting sites. The arresting sites in DNA have the property of trapping a certain fraction of elongating RNA polymerases that pass through, resulting in locked ternary complexes. Cleavage of the nascent transcript by S-II allows the resumption of elongation from the new 3'-terminus. The sequence is that of Transcription elongation factor S-II (tfs1) from Schizosaccharomyces pombe (strain 972 / ATCC 24843) (Fission yeast).